The chain runs to 177 residues: KxDL motif-containing protein 1 (177 aa).

Residue Met-1 is modified to N-acetylmethionine. A disordered region spans residues 100-177 (SHIPEGSFLE…TDDEEETHEE (78 aa)). The span at 125-145 (ATSEQSTGSCDTSPDTVSPSL) shows a compositional bias: polar residues.

Belongs to the KXD1 family. Component of the BLOC-one-related complex (BORC) which is composed of BLOC1S1, BLOC1S2, BORCS5, BORCS6, BORCS7, BORCS8, KXD1 and SNAPIN. Associates with the BLOC-1 complex. Interacts with BLOC1S1. Interacts with DTNBP1/BLOC1S7 (via coiled-coil domain). As to expression, widely expressed.

It is found in the lysosome membrane. Its function is as follows. As part of the BORC complex may play a role in lysosomes movement and localization at the cell periphery. Associated with the cytosolic face of lysosomes, the BORC complex may recruit ARL8B and couple lysosomes to microtubule plus-end-directed kinesin motor. May also be involved in the biogenesis of lysosome-related organelles such as melanosomes. The sequence is that of KxDL motif-containing protein 1 (Kxd1) from Mus musculus (Mouse).